A 313-amino-acid chain; its full sequence is Olfactory receptor 56A4 (313 aa).

At 1–28 the chain is on the extracellular side; the sequence is MASPSNDSTAPVSEFLLICFPNFQSWQH. N-linked (GlcNAc...) asparagine glycosylation occurs at asparagine 6. The helical transmembrane segment at 29-49 threads the bilayer; sequence WLSLPLSLLFLLAMGANTTLL. Residues 50-57 are Cytoplasmic-facing; that stretch reads ITIQLEAS. The chain crosses the membrane as a helical span at residues 58-78; that stretch reads LHQPLYYLLSLLSLLDIVLCL. The Extracellular segment spans residues 79-102; it reads TVIPKVLAIFWFDLRSISFPACFL. Residues cysteine 100 and cysteine 192 are joined by a disulfide bond. A helical membrane pass occupies residues 103–123; sequence QMFIMNSFLTMESCTFMVMAY. Residues 124–142 are Cytoplasmic-facing; that stretch reads DRYVAICHPLRYPSIITDQ. Residues 143–163 form a helical membrane-spanning segment; sequence FVARAVVFVIARNAFVSLPVP. Residues 164–199 lie on the Extracellular side of the membrane; it reads MLSARLRYCAGNIIKNCICSNLSVSKLSCDDITFNQ. N-linked (GlcNAc...) asparagine glycosylation is present at asparagine 184. A helical membrane pass occupies residues 200–220; the sequence is LYQFVAGWTLLGSDLILIVIS. The Cytoplasmic portion of the chain corresponds to 221 to 240; it reads YSFILKVVLRIKAEGAVAKA. Residues 241–261 form a helical membrane-spanning segment; sequence LSTCGSHFILILFFSTVLLVL. Residues 262–276 are Extracellular-facing; sequence VITNLARKRIPPDVP. The helical transmembrane segment at 277 to 297 threads the bilayer; sequence ILLNILHHLIPPALNPIVYGV. Residues 298-313 are Cytoplasmic-facing; the sequence is RTKEIKQGIQNLLKRL.

The protein belongs to the G-protein coupled receptor 1 family.

The protein resides in the cell membrane. Functionally, odorant receptor. The sequence is that of Olfactory receptor 56A4 (OR56A4) from Homo sapiens (Human).